The chain runs to 225 residues: Ribonuclease 3 (225 aa).

Residues 4–133 (FEKLETLLGY…LIAAIYLDSN (130 aa)) form the RNase III domain. Residue E46 participates in Mg(2+) binding. Residue D50 is part of the active site. Residues N119 and E122 each contribute to the Mg(2+) site. The active site involves E122. In terms of domain architecture, DRBM spans 158-225 (DPKTALQEWA…AARSLLHRLK (68 aa)).

The protein belongs to the ribonuclease III family. Homodimer. Mg(2+) is required as a cofactor.

The protein localises to the cytoplasm. It catalyses the reaction Endonucleolytic cleavage to 5'-phosphomonoester.. Its function is as follows. Digests double-stranded RNA. Involved in the processing of primary rRNA transcript to yield the immediate precursors to the large and small rRNAs (23S and 16S). Processes some mRNAs, and tRNAs when they are encoded in the rRNA operon. Processes pre-crRNA and tracrRNA of type II CRISPR loci if present in the organism. This is Ribonuclease 3 from Rickettsia prowazekii (strain Madrid E).